The chain runs to 540 residues: ADP,ATP carrier protein 2 (540 aa).

The next 11 helical transmembrane spans lie at 24–44, 62–82, 94–114, 151–171, 223–243, 295–315, 337–357, 367–387, 391–411, 458–478, and 480–500; these read FSKFVPLFLLAFFVGFNYCLL, VIPFLKVWGIVPGAVIVTMVY, VFYCFMAAFLGFFFLFAVIIY, IYYVMSELWSSVVLSMLFWGL, SVMLNLTMLITCSGLIMIWLY, LLGLAIIVLSYNLVIHLFEVV, ITTLIGVVSVLAAVLLTGQCI, LVTPLVMLVSGLLFFGTIFAA, ISIFGGVLGMTPLALAAWTGG, SGGSLIYQGLLVIFSSVAASL, and VIALVLLIIMVVWIAVVAYIG.

This sequence belongs to the ADP/ATP translocase tlc family.

The protein localises to the cell membrane. The polypeptide is ADP,ATP carrier protein 2 (tlcB) (Chlamydia pneumoniae (Chlamydophila pneumoniae)).